Reading from the N-terminus, the 433-residue chain is Cell division protein FtsZ homolog 1, chloroplastic (433 aa).

A chloroplast-targeting transit peptide spans 1-66; the sequence is MAIIPLAQLN…TRSKSMRLRC (66 aa). Residue Ser-67 is modified to N-acetylserine. Residues 83-87, 170-172, Glu-201, Arg-205, and Asp-249 each bind GTP; these read GGGNN and GTG. A disordered region spans residues 399 to 433; it reads GSSGQQENKGMSLPHQKQSPSTISTKSSSPRRLFF. Positions 414–433 are enriched in low complexity; it reads QKQSPSTISTKSSSPRRLFF.

It belongs to the FtsZ family. In terms of assembly, aggregates to form a contractile ring-like structure; contraction of the ring was accompanied by an increase in the filament turnover rate. This aggregation is regulated in midchloroplast stroma by MIND1 (repressor) and MINE1 (promoter). Self-interacts and binds to FTSZ2-1 in heteromers to form two morphologically distinct types of filaments, termed type-I (smooth filaments) and type-II (rough filaments), in a GTP-dependent manner. Interacts with ARC3. Part of a complex made of ARC3, ARC6, FTSZ1 and FTSZ2. As to expression, in pollen grain, restricted to plastids of vegetative cells. Also present in pollen tubes plastids.

The protein localises to the plastid. It localises to the chloroplast stroma. It is found in the chloroplast thylakoid membrane. Functionally, exhibits GTPase activity. Component of the plastid division machinery that forms a contractile ring at the division site. Required for plastid division in a dose-dependent manner. Involved in epidermal plastids division in a MINE1-dependent manner. Involved in blue light-induced chloroplast movements. May regulate thylakoid development. In the vegetative shoot apex, at the shoot apical meristem (SAM), where the proplastid-to-chloroplast transition takes place, contributes equally with FTSZ2-1 in the L2 layer to plastid division. The polypeptide is Cell division protein FtsZ homolog 1, chloroplastic (Arabidopsis thaliana (Mouse-ear cress)).